Reading from the N-terminus, the 172-residue chain is Adenine phosphoribosyltransferase (172 aa).

The protein belongs to the purine/pyrimidine phosphoribosyltransferase family. As to quaternary structure, homodimer.

The protein localises to the cytoplasm. It carries out the reaction AMP + diphosphate = 5-phospho-alpha-D-ribose 1-diphosphate + adenine. The protein operates within purine metabolism; AMP biosynthesis via salvage pathway; AMP from adenine: step 1/1. Functionally, catalyzes a salvage reaction resulting in the formation of AMP, that is energically less costly than de novo synthesis. The protein is Adenine phosphoribosyltransferase of Exiguobacterium sp. (strain ATCC BAA-1283 / AT1b).